The sequence spans 247 residues: Ribosomal RNA small subunit methyltransferase J (247 aa).

Residues 101–102, 117–118, 153–154, and Asp171 each bind S-adenosyl-L-methionine; these read RD, ER, and SS.

The protein belongs to the methyltransferase superfamily. RsmJ family.

Its subcellular location is the cytoplasm. The enzyme catalyses guanosine(1516) in 16S rRNA + S-adenosyl-L-methionine = N(2)-methylguanosine(1516) in 16S rRNA + S-adenosyl-L-homocysteine + H(+). Its function is as follows. Specifically methylates the guanosine in position 1516 of 16S rRNA. This is Ribosomal RNA small subunit methyltransferase J from Photorhabdus laumondii subsp. laumondii (strain DSM 15139 / CIP 105565 / TT01) (Photorhabdus luminescens subsp. laumondii).